Here is a 253-residue protein sequence, read N- to C-terminus: Tetraspanin-3 (253 aa).

Over 1–11 (MGQCGITSSKT) the chain is Cytoplasmic. A helical membrane pass occupies residues 12–32 (VLVFLNLIFWGAAGILCYVGA). Topologically, residues 33–50 (YVFITYDDYDHFFEDVYT) are extracellular. Residues 51–71 (LIPAVVIIAVGALLFIIGLIG) traverse the membrane as a helical segment. Residues 72 to 85 (CCATIRESRCGLAT) are Cytoplasmic-facing. The chain crosses the membrane as a helical span at residues 86 to 106 (FVIILLLVFVTEVVVVVLGYV). At 107 to 212 (YRAKVENEVD…KKLQEIMMHV (106 aa)) the chain is on the extracellular side. Residues asparagine 127, asparagine 152, asparagine 167, and asparagine 183 are each glycosylated (N-linked (GlcNAc...) asparagine). Residues 213–233 (IWAALAFAAIQLLGMLCACIV) form a helical membrane-spanning segment. Residues 234–253 (LCRRSRDPAYELLITGGTYA) are Cytoplasmic-facing.

Belongs to the tetraspanin (TM4SF) family. As to quaternary structure, interacts with claudin-11/CLDN11 and integrins.

It is found in the membrane. Regulates the proliferation and migration of oligodendrocytes, a process essential for normal myelination and repair. The protein is Tetraspanin-3 (TSPAN3) of Homo sapiens (Human).